Reading from the N-terminus, the 274-residue chain is NH(3)-dependent NAD(+) synthetase (274 aa).

Residue 46 to 53 (GISGGQDS) participates in ATP binding. Mg(2+) is bound at residue D52. Residue R140 participates in deamido-NAD(+) binding. An ATP-binding site is contributed by T160. E165 lines the Mg(2+) pocket. Positions 173 and 180 each coordinate deamido-NAD(+). ATP-binding residues include K189 and T211. Residue 260 to 261 (HK) coordinates deamido-NAD(+).

It belongs to the NAD synthetase family. As to quaternary structure, homodimer.

The enzyme catalyses deamido-NAD(+) + NH4(+) + ATP = AMP + diphosphate + NAD(+) + H(+). It participates in cofactor biosynthesis; NAD(+) biosynthesis; NAD(+) from deamido-NAD(+) (ammonia route): step 1/1. In terms of biological role, catalyzes the ATP-dependent amidation of deamido-NAD to form NAD. Uses ammonia as a nitrogen source. The polypeptide is NH(3)-dependent NAD(+) synthetase (Lysinibacillus sphaericus (strain C3-41)).